The primary structure comprises 349 residues: DNA polymerase IV (349 aa).

Residues 7–188 enclose the UmuC domain; the sequence is IIHIDMDYFF…LPVKKLFGVG (182 aa). Residues Asp11 and Asp106 each contribute to the Mg(2+) site. The active site involves Glu107.

Belongs to the DNA polymerase type-Y family. Monomer. Requires Mg(2+) as cofactor.

Its subcellular location is the cytoplasm. It catalyses the reaction DNA(n) + a 2'-deoxyribonucleoside 5'-triphosphate = DNA(n+1) + diphosphate. Poorly processive, error-prone DNA polymerase involved in untargeted mutagenesis. Copies undamaged DNA at stalled replication forks, which arise in vivo from mismatched or misaligned primer ends. These misaligned primers can be extended by PolIV. Exhibits no 3'-5' exonuclease (proofreading) activity. May be involved in translesional synthesis, in conjunction with the beta clamp from PolIII. This is DNA polymerase IV from Francisella tularensis subsp. holarctica (strain FTNF002-00 / FTA).